The primary structure comprises 130 residues: Phosphomevalonate dehydratase small subunit (130 aa).

Catalysis depends on S62, which acts as the Proton acceptor.

It belongs to the AcnX type II small subunit family. In terms of assembly, heterodimer composed of a large subunit (PMDh-L) and a small subunit (PMDh-S).

The enzyme catalyses (R)-5-phosphomevalonate = (2E)-3-methyl-5-phosphooxypent-2-enoate + H2O. Its pathway is isoprenoid biosynthesis; isopentenyl diphosphate biosynthesis via mevalonate pathway. Functionally, component of a hydro-lyase that catalyzes the dehydration of mevalonate 5-phosphate (MVA5P) to form trans-anhydromevalonate 5-phosphate (tAHMP). Involved in the archaeal mevalonate (MVA) pathway, which provides fundamental precursors for isoprenoid biosynthesis, such as isopentenyl diphosphate (IPP) and dimethylallyl diphosphate (DMAPP). In Pyrococcus abyssi (strain GE5 / Orsay), this protein is Phosphomevalonate dehydratase small subunit.